A 376-amino-acid chain; its full sequence is Alanine racemase (376 aa).

K40 functions as the Proton acceptor; specific for D-alanine in the catalytic mechanism. Residue K40 is modified to N6-(pyridoxal phosphate)lysine. R138 contacts substrate. The active-site Proton acceptor; specific for L-alanine is the Y270. Residue M317 participates in substrate binding.

It belongs to the alanine racemase family. Pyridoxal 5'-phosphate serves as cofactor.

It catalyses the reaction L-alanine = D-alanine. The protein operates within amino-acid biosynthesis; D-alanine biosynthesis; D-alanine from L-alanine: step 1/1. Its function is as follows. Catalyzes the interconversion of L-alanine and D-alanine. May also act on other amino acids. In Lactobacillus acidophilus (strain ATCC 700396 / NCK56 / N2 / NCFM), this protein is Alanine racemase (alr).